Consider the following 118-residue polypeptide: Large ribosomal subunit protein uL18 (118 aa).

It belongs to the universal ribosomal protein uL18 family. Part of the 50S ribosomal subunit; part of the 5S rRNA/L5/L18/L25 subcomplex. Contacts the 5S and 23S rRNAs.

Its function is as follows. This is one of the proteins that bind and probably mediate the attachment of the 5S RNA into the large ribosomal subunit, where it forms part of the central protuberance. This chain is Large ribosomal subunit protein uL18, found in Dichelobacter nodosus (strain VCS1703A).